The chain runs to 529 residues: Glycylpeptide N-tetradecanoyltransferase 2 (529 aa).

The segment at 1-82 is disordered; that stretch reads MAEDSESAAS…QEIKIQQSSK (82 aa). Acidic residues predominate over residues 15-32; sequence ELDDQDTCGIDGDNEEET. At S38 the chain carries Phosphoserine. Positions 46–57 are enriched in basic residues; that stretch reads KKKKKKQKRKKE. Positions 61–82 are enriched in polar residues; sequence SGGTKSDSASDSQEIKIQQSSK. Tetradecanoyl-CoA contacts are provided by W153, L281, V283, S289, R291, V292, and A293.

The protein belongs to the NMT family.

It localises to the cytoplasm. The protein resides in the membrane. It carries out the reaction N-terminal glycyl-[protein] + tetradecanoyl-CoA = N-tetradecanoylglycyl-[protein] + CoA + H(+). The catalysed reaction is N-terminal glycyl-L-lysyl-[protein] + tetradecanoyl-CoA = N-terminal glycyl-(N(6)-tetradecanoyl)-L-lysyl-[protein] + CoA + H(+). Its function is as follows. Adds a myristoyl group to the N-terminal glycine residue of certain cellular and viral proteins. Also able to mediate N-terminal lysine myristoylation of proteins: catalyzes myristoylation of ARF6 on both 'Gly-2' and 'Lys-3'. Lysine myristoylation is required to maintain ARF6 on membranes during the GTPase cycle. In Mus musculus (Mouse), this protein is Glycylpeptide N-tetradecanoyltransferase 2 (Nmt2).